The following is a 385-amino-acid chain: MALPHDSNETSYLLPPNNEDWGRQTIPDFVYGQKDLMAEGIQWPRNAPGIPDALPQSPFDAALCSAWKQRVELGLFRYRLRELQTQILPGAVGFVAQLNVERGVQRRPPQTIKSVRQAFDPVQFNFNKIRPGEVLFRLHREPDLPGTLLQEDILVVINVSPLEWGHVLLVPEPARQLPQRLLPGALRAGIEAVLLSLHPGFRVGFNSLGGLASVNHLHLHGYYLAHRLPVEQAPSEPLDPGGHLHLLQDLPAPGFLFYTRGPGPDLESLISRVCRATDYLTDHEIAHNLFVTRGAPPGKTSPSSALTGVRVILWARKSSFGIKDGEAFNVALCELAGHLPVKTSQDFSSLTEAAAVALIQDCRLPPSQAEDVQAALVALMSQEEQ.

His-218 acts as the Tele-GMP-histidine intermediate in catalysis.

This sequence belongs to the GDPGP1 family.

Its subcellular location is the cytoplasm. The catalysed reaction is GDP-alpha-D-glucose + phosphate = alpha-D-glucose 1-phosphate + GDP + H(+). Functionally, specific and highly efficient GDP-D-glucose phosphorylase regulating the levels of GDP-D-glucose in cells. This is GDP-D-glucose phosphorylase 1 (GDPGP1) from Homo sapiens (Human).